The following is a 495-amino-acid chain: Glycerol kinase (495 aa).

ADP is bound at residue threonine 11. Residues threonine 11, threonine 12, and serine 13 each contribute to the ATP site. Threonine 11 contributes to the sn-glycerol 3-phosphate binding site. Arginine 15 provides a ligand contact to ADP. Positions 81, 82, 133, and 242 each coordinate sn-glycerol 3-phosphate. Glycerol-binding residues include arginine 81, glutamate 82, tyrosine 133, aspartate 242, and glutamine 243. ADP contacts are provided by threonine 264 and glycine 307. Positions 264, 307, 311, and 408 each coordinate ATP. Glycine 408 contacts ADP.

It belongs to the FGGY kinase family.

The enzyme catalyses glycerol + ATP = sn-glycerol 3-phosphate + ADP + H(+). The protein operates within polyol metabolism; glycerol degradation via glycerol kinase pathway; sn-glycerol 3-phosphate from glycerol: step 1/1. With respect to regulation, inhibited by fructose 1,6-bisphosphate (FBP). In terms of biological role, key enzyme in the regulation of glycerol uptake and metabolism. Catalyzes the phosphorylation of glycerol to yield sn-glycerol 3-phosphate. The polypeptide is Glycerol kinase (Geobacter sp. (strain M21)).